A 1481-amino-acid chain; its full sequence is ABC-type transporter braE (1481 aa).

6 helical membrane passes run 27-47 (FTVK…FILA), 86-106 (LILI…SSAL), 130-150 (IFLS…ARTY), 159-179 (EIAF…MLLL), 269-289 (LYVP…SFFC), and 308-328 (PANI…VIAI). Residues 281–549 (LAAIGSFFCQ…LLETLPQMAA (269 aa)) form the ABC transmembrane type-1 1 domain. Asn-367 carries N-linked (GlcNAc...) asparagine glycosylation. The next 3 membrane-spanning stretches (helical) occupy residues 389–409 (ELWG…NLLG), 410–430 (VAFI…SFFM), and 491–511 (LMLT…PITF). The region spanning 594–823 (VAIKDGSFGW…QSYIHSLGVK (230 aa)) is the ABC transporter 1 domain. 627–634 (GPIASGKS) is an ATP binding site. N-linked (GlcNAc...) asparagine glycans are attached at residues Asn-671 and Asn-813. Helical transmembrane passes span 887-907 (IAIF…TIWL), 928-948 (AIYA…GVLL), 1001-1021 (SALL…AVIA), 1026-1046 (YLAI…KFYL), 1111-1131 (LHFV…SLAV), and 1144-1164 (LVTL…YTAL). In terms of domain architecture, ABC transmembrane type-1 2 spans 887 to 1166 (IAIFTSGLLY…VVIYYTALET (280 aa)). N-linked (GlcNAc...) asparagine glycosylation is found at Asn-1207 and Asn-1232. The 254-residue stretch at 1224 to 1477 (LTTNELSSND…PGTRFGELWS (254 aa)) folds into the ABC transporter 2 domain. ATP is bound at residue 1260 to 1267 (GRTGSGKS). Residues Asn-1330 and Asn-1364 are each glycosylated (N-linked (GlcNAc...) asparagine).

It belongs to the ABC transporter superfamily. ABCC family. Conjugate transporter (TC 3.A.1.208) subfamily.

The protein resides in the membrane. ABC-type transporter; part of the gene cluster that mediates the biosynthesis of the brasilane terpene glycosides brasilane D and E. The sequence is that of ABC-type transporter braE from Annulohypoxylon truncatum (Hypoxylon truncatum).